The chain runs to 367 residues: MASEMNASPEYTGYRLEVFIAVFTPLTIIAVALRFYARSLTSKKIDSGDWLIIAALVGQIVAGGIAIGAVKQAGVGHHAAYLAETNPETLVAFFKYLVAMSTWYATTEGLAKLAVCILYKRLFPQRGIHMVINTTMLVLVGASVGGGLADLFGCTPFSAHWGTAEEQAAHCIDTEALFVWGSFPNIVTDVVLLVLPMPIVWGLHASVRLRLVLVLTFLFGSIFGELIGGDSGLITSVLRFIAFYNKSSFIDPTFHAVELIIWTVCEPGVYLIAACLLVYRPLLEKIGIPLVGGVSSRGGNRQEPTELAFQKPSRPRNGAVIKSIGSGSISESGFEYIGDDDQRPLRRQGGITATTNVEVTWAAGSAV.

3 helical membrane passes run 16-36, 50-70, and 90-110; these read LEVFIAVFTPLTIIAVALRFY, WLIIAALVGQIVAGGIAIGAV, and LVAFFKYLVAMSTWYATTEGL. N133 carries N-linked (GlcNAc...) asparagine glycosylation. A run of 3 helical transmembrane segments spans residues 137–157, 183–203, and 211–231; these read LVLVGASVGGGLADLFGCTPF, FPNIVTDVVLLVLPMPIVWGL, and LVLVLTFLFGSIFGELIGGDS. The N-linked (GlcNAc...) asparagine glycan is linked to N245. The helical transmembrane segment at 259–279 threads the bilayer; that stretch reads LIIWTVCEPGVYLIAACLLVY.

The protein belongs to the SAT4 family.

It localises to the membrane. The protein operates within secondary metabolite biosynthesis. Functionally, part of the gene cluster that mediates the biosynthesis of (2Z,4E,6E,10E)-9-hydroxydodeca-2,4,6,10-tetraenoic acid (BAA), (2E,4E,6E,10E)-9-hydroxydodeca-2,4,6,10-tetraenoic acid (BAB), and (2Z,4E,6E)-octa-2,4,6-trienedioic acid (PBA). The highly reducing polyketide synthase Ba17a is sufficent to produce PBA and BAA. The still to be characterized protein Ba17b leads to an increased production of BAA as well as to the production of the new compound BAB. BAA does not possess insecticidal activity against G.mellonella larvae, however, both BAA and BAB increase the growth of Candida albicans and BAA can mitigate the fungicidal effects of fluconazole over C.albicans, suggesting that generalist pathogens such as M.anisopliae, can potentially manipulate the yeast microbiota found in arthropods (and anywhere else) by the activity of compounds as BAA and BAB. The protein is Polyenoic acids biosynthesis gene cluster protein Ba17b of Metarhizium anisopliae (Entomophthora anisopliae).